A 96-amino-acid chain; its full sequence is UPF0251 protein Shal_3723 (96 aa).

It belongs to the UPF0251 family.

This is UPF0251 protein Shal_3723 from Shewanella halifaxensis (strain HAW-EB4).